A 153-amino-acid polypeptide reads, in one-letter code: Large ribosomal subunit protein uL15 (153 aa).

Positions 21–41 (RGIGSGKGKTGGRGIKGQKSR) are disordered. A compositionally biased stretch (gly residues) spans 23–35 (IGSGKGKTGGRGI).

This sequence belongs to the universal ribosomal protein uL15 family. As to quaternary structure, part of the 50S ribosomal subunit.

Functionally, binds to the 23S rRNA. The sequence is that of Large ribosomal subunit protein uL15 from Rickettsia felis (strain ATCC VR-1525 / URRWXCal2) (Rickettsia azadi).